We begin with the raw amino-acid sequence, 173 residues long: Alpha-crystallin A chain (173 aa).

Met-1 is modified (N-acetylmethionine). The tract at residues Met-1–Glu-63 is required for complex formation with BFSP1 and BFSP2. Gln-6 is subject to Deamidated glutamine; partial. A Phosphoserine modification is found at Ser-45. Position 50 is a deamidated glutamine; partial (Gln-50). A sHSP domain is found at Leu-52–Ser-162. N6-acetyllysine is present on Lys-70. Gln-90 bears the Deamidated glutamine; partial mark. Lys-99 carries the N6-acetyllysine modification. His-100 contacts Zn(2+). Asn-101 carries the post-translational modification Deamidated asparagine; partial. Residues Glu-102 and His-107 each coordinate Zn(2+). Ser-122 is modified (phosphoserine). Asn-123 carries the post-translational modification Deamidated asparagine; partial. The disordered stretch occupies residues Pro-144 to Ser-173. Gln-147 bears the Deamidated glutamine; partial mark. Over residues Gly-153 to Pro-167 the composition is skewed to basic and acidic residues. His-154 provides a ligand contact to Zn(2+). Ser-162 is a glycosylation site (O-linked (GlcNAc) serine).

It belongs to the small heat shock protein (HSP20) family. As to quaternary structure, heteromer composed of three CRYAA and one CRYAB subunits. Inter-subunit bridging via zinc ions enhances stability, which is crucial as there is no protein turn over in the lens. Can also form homodimers and homotetramers (dimers of dimers) which serve as the building blocks of homooligomers. Within homooligomers, the zinc-binding motif is created from residues of 3 different molecules. His-100 and Glu-102 from one molecule are ligands of the zinc ion, and His-107 and His-154 residues from additional molecules complete the site with tetrahedral coordination geometry. Part of a complex required for lens intermediate filament formation composed of BFSP1, BFSP2 and CRYAA. Post-translationally, acetylation at Lys-70 may increase chaperone activity. In terms of processing, undergoes age-dependent proteolytical cleavage at the C-terminus.

It is found in the cytoplasm. Its subcellular location is the nucleus. In terms of biological role, contributes to the transparency and refractive index of the lens. Acts as a chaperone, preventing aggregation of various proteins under a wide range of stress conditions. Required for the correct formation of lens intermediate filaments as part of a complex composed of BFSP1, BFSP2 and CRYAA. This Otolemur crassicaudatus (Brown greater galago) protein is Alpha-crystallin A chain (CRYAA).